The following is a 31-amino-acid chain: Hyaluronidase (31 aa).

It belongs to the glycosyl hydrolase 56 family. In terms of processing, contains 2 disulfide bonds. N-glycosylated on at least two Asn residues by identical heptasaccharide units composed of Man, GlcNAc, and Fuc residues in the molar ration of 3:2:2. In terms of tissue distribution, expressed by the venom gland.

The protein localises to the secreted. It catalyses the reaction Random hydrolysis of (1-&gt;4)-linkages between N-acetyl-beta-D-glucosamine and D-glucuronate residues in hyaluronate.. Its function is as follows. Hydrolyzes high molecular weight hyaluronic acid to produce small oligosaccharides. The protein is Hyaluronidase of Vespula maculifrons (Eastern yellow jacket).